A 356-amino-acid polypeptide reads, in one-letter code: Mitogen-activated protein kinase PMK11 (356 aa).

In terms of domain architecture, Protein kinase spans 24–312 (YDIQDVVGEG…VEEALKHPYL (289 aa)). Residues 30 to 38 (VGEGAYGVV) and K53 each bind ATP.

It belongs to the protein kinase superfamily. CMGC Ser/Thr protein kinase family. MAP kinase subfamily. The cofactor is Mg(2+). Post-translationally, phosphorylated by MST7.

It carries out the reaction L-seryl-[protein] + ATP = O-phospho-L-seryl-[protein] + ADP + H(+). It catalyses the reaction L-threonyl-[protein] + ATP = O-phospho-L-threonyl-[protein] + ADP + H(+). Mitogen-activated protein kinase; part of the MST11-MST7-PMK1 MAP kinase (MAPK) cascade that is essential for appressorium formation, penetration and invasive growth. Central regulator of appressorium development that acts downstream of the cAMP signal. The MST11-MST7-PMK1 MAP kinase cascade transduces signals from the cell surface sensors MDB2 and SHO1 that recognize various surface signals such as surface hydrophobicity, cutin monomers, and rice leaf waxes. Regulates expression of secreted fungal effector proteins implicated of host immune defenses, preventing reactive oxygen species generation and excessive callose deposition at plasmodesmata. Furthermore, controls the hyphal constriction required for fungal growth from one rice cell to the neighboring cell, enabling host tissue colonization and blast disease. Targets downstream of the PMK1-MAPK pathway include transcription factor MST12 and pathogenicity-related genes GAS1 and GAS2, both of which are expressed during appressorium formation, even if regulation of MST12 is not associated with expression of GAS1 or GAS2. The protein is Mitogen-activated protein kinase PMK11 of Pyricularia oryzae (strain 70-15 / ATCC MYA-4617 / FGSC 8958) (Rice blast fungus).